Consider the following 141-residue polypeptide: Hemoglobin subunit alpha-1 (141 aa).

Residues 1–141 (VLSAADKGNV…VSTVLTSKYR (141 aa)) enclose the Globin domain. Histidine 58 is a binding site for O2. Histidine 87 lines the heme b pocket.

The protein belongs to the globin family. As to quaternary structure, heterotetramer of two alpha chains and two beta chains. In terms of tissue distribution, red blood cells.

Involved in oxygen transport from the lung to the various peripheral tissues. The polypeptide is Hemoglobin subunit alpha-1 (Bos mutus grunniens (Wild yak)).